The following is a 188-amino-acid chain: Chitin synthase 1 (188 aa).

Belongs to the chitin synthase family. Class I subfamily.

It is found in the cell membrane. The catalysed reaction is [(1-&gt;4)-N-acetyl-beta-D-glucosaminyl](n) + UDP-N-acetyl-alpha-D-glucosamine = [(1-&gt;4)-N-acetyl-beta-D-glucosaminyl](n+1) + UDP + H(+). Polymerizes chitin, a structural polymer of the cell wall and septum, by transferring the sugar moiety of UDP-GlcNAc to the non-reducing end of the growing chitin polymer. The protein is Chitin synthase 1 (CHS1) of Ajellomyces dermatitidis (Blastomyces dermatitidis).